The primary structure comprises 230 residues: Large ribosomal subunit protein uL1 (230 aa).

The protein belongs to the universal ribosomal protein uL1 family. As to quaternary structure, part of the 50S ribosomal subunit.

Functionally, binds directly to 23S rRNA. The L1 stalk is quite mobile in the ribosome, and is involved in E site tRNA release. Its function is as follows. Protein L1 is also a translational repressor protein, it controls the translation of the L11 operon by binding to its mRNA. The polypeptide is Large ribosomal subunit protein uL1 (Lactobacillus johnsonii (strain CNCM I-12250 / La1 / NCC 533)).